A 407-amino-acid polypeptide reads, in one-letter code: Monooxygenase 2 (407 aa).

This sequence belongs to the 3-hydroxybenzoate 6-hydroxylase family. As to quaternary structure, monomer. It depends on FAD as a cofactor. Expressed in seeds, seedlings, roots, leaves, flowers, pollen and siliques.

The protein is Monooxygenase 2 of Arabidopsis thaliana (Mouse-ear cress).